The following is a 79-amino-acid chain: Small ribosomal subunit protein bS18 (79 aa).

This sequence belongs to the bacterial ribosomal protein bS18 family. Part of the 30S ribosomal subunit. Forms a tight heterodimer with protein bS6.

Its function is as follows. Binds as a heterodimer with protein bS6 to the central domain of the 16S rRNA, where it helps stabilize the platform of the 30S subunit. This is Small ribosomal subunit protein bS18 from Streptococcus suis (strain 98HAH33).